Here is a 256-residue protein sequence, read N- to C-terminus: Thiazole synthase (256 aa).

Lys-95 (schiff-base intermediate with DXP) is an active-site residue. 1-deoxy-D-xylulose 5-phosphate-binding positions include Gly-156, 182–183 (AG), and 204–205 (NT).

The protein belongs to the ThiG family. Homotetramer. Forms heterodimers with either ThiH or ThiS.

It is found in the cytoplasm. It catalyses the reaction [ThiS sulfur-carrier protein]-C-terminal-Gly-aminoethanethioate + 2-iminoacetate + 1-deoxy-D-xylulose 5-phosphate = [ThiS sulfur-carrier protein]-C-terminal Gly-Gly + 2-[(2R,5Z)-2-carboxy-4-methylthiazol-5(2H)-ylidene]ethyl phosphate + 2 H2O + H(+). It participates in cofactor biosynthesis; thiamine diphosphate biosynthesis. Functionally, catalyzes the rearrangement of 1-deoxy-D-xylulose 5-phosphate (DXP) to produce the thiazole phosphate moiety of thiamine. Sulfur is provided by the thiocarboxylate moiety of the carrier protein ThiS. In vitro, sulfur can be provided by H(2)S. This is Thiazole synthase from Escherichia coli O45:K1 (strain S88 / ExPEC).